The chain runs to 360 residues: UDP-N-acetylglucosamine--N-acetylmuramyl-(pentapeptide) pyrophosphoryl-undecaprenol N-acetylglucosamine transferase (360 aa).

2 residues coordinate UDP-N-acetyl-alpha-D-glucosamine: Ser-198 and Gln-289.

It belongs to the glycosyltransferase 28 family. MurG subfamily.

Its subcellular location is the cell membrane. It catalyses the reaction Mur2Ac(oyl-L-Ala-gamma-D-Glu-L-Lys-D-Ala-D-Ala)-di-trans,octa-cis-undecaprenyl diphosphate + UDP-N-acetyl-alpha-D-glucosamine = beta-D-GlcNAc-(1-&gt;4)-Mur2Ac(oyl-L-Ala-gamma-D-Glu-L-Lys-D-Ala-D-Ala)-di-trans,octa-cis-undecaprenyl diphosphate + UDP + H(+). Its pathway is cell wall biogenesis; peptidoglycan biosynthesis. Cell wall formation. Catalyzes the transfer of a GlcNAc subunit on undecaprenyl-pyrophosphoryl-MurNAc-pentapeptide (lipid intermediate I) to form undecaprenyl-pyrophosphoryl-MurNAc-(pentapeptide)GlcNAc (lipid intermediate II). This chain is UDP-N-acetylglucosamine--N-acetylmuramyl-(pentapeptide) pyrophosphoryl-undecaprenol N-acetylglucosamine transferase, found in Streptococcus pyogenes serotype M49 (strain NZ131).